The sequence spans 294 residues: MGEKNEELQILIITGLSGAGKTQAINCLEDIGYYCVDNLPPALMFKFIELSMQSEGIKKVALVIDVRGGDFFPDLSLVLEELEDSQINYQIIFLEASDEVLVRRFKESRRRHPLGSSSRLLEAIQEERRMLQELRGKAHFLIDTSNLSPRELKEKLDLRYSEDETLRFSASIVSFGYKLGLPMDSDLVIDVRFLPNPFYDPLMRTMTGKDPMVIDYVLESSVTKSFTRRFLNLLKYLIPYYIKEGKTNLAIAIGCTGGQHRSVVLADYTGKQLEKMGYNVIVRHRDIAKHKTEE.

15–22 (GLSGAGKT) contacts ATP. 65 to 68 (DVRG) serves as a coordination point for GTP.

It belongs to the RapZ-like family.

In terms of biological role, displays ATPase and GTPase activities. The chain is Nucleotide-binding protein Swol_0262 from Syntrophomonas wolfei subsp. wolfei (strain DSM 2245B / Goettingen).